Here is a 293-residue protein sequence, read N- to C-terminus: Ribosomal RNA small subunit methyltransferase H (293 aa).

S-adenosyl-L-methionine-binding positions include 34–36 (GGH), aspartate 54, leucine 86, aspartate 101, and glutamine 108.

Belongs to the methyltransferase superfamily. RsmH family.

The protein resides in the cytoplasm. It carries out the reaction cytidine(1402) in 16S rRNA + S-adenosyl-L-methionine = N(4)-methylcytidine(1402) in 16S rRNA + S-adenosyl-L-homocysteine + H(+). Specifically methylates the N4 position of cytidine in position 1402 (C1402) of 16S rRNA. This Elusimicrobium minutum (strain Pei191) protein is Ribosomal RNA small subunit methyltransferase H.